We begin with the raw amino-acid sequence, 457 residues long: UDP-N-acetylmuramate--L-alanine ligase (457 aa).

Residue G112 to S118 participates in ATP binding.

This sequence belongs to the MurCDEF family.

It is found in the cytoplasm. It carries out the reaction UDP-N-acetyl-alpha-D-muramate + L-alanine + ATP = UDP-N-acetyl-alpha-D-muramoyl-L-alanine + ADP + phosphate + H(+). The protein operates within cell wall biogenesis; peptidoglycan biosynthesis. Functionally, cell wall formation. In Desulfosudis oleivorans (strain DSM 6200 / JCM 39069 / Hxd3) (Desulfococcus oleovorans), this protein is UDP-N-acetylmuramate--L-alanine ligase.